The sequence spans 1801 residues: Focadhesin (1801 aa).

An N6-acetyllysine modification is found at lysine 819.

Interacts with VCL. As to expression, ubiquitous. High expression in brain followed by testis, muscle, pancreas, heart, ovary, small intestine, placenta, prostate, thymus, kidney, colon, liver, lung, spleen and leukocytes. Expression is reduced in most glioblastomas and all glioblastoma cell lines.

It localises to the cell junction. The protein resides in the focal adhesion. It is found in the cytoplasm. Its subcellular location is the cytosol. Functionally, required for the maintenance of SKIC2 and SKIC3 proteostatic levels in the liver. May be involved in the regulation of RNA degradation by the exosome complex. Potential tumor suppressor in gliomas. In Homo sapiens (Human), this protein is Focadhesin.